Reading from the N-terminus, the 261-residue chain is Cytochrome c oxidase subunit 3 (261 aa).

Residues 1 to 15 (MTHQTHAYHMVNPSP) lie on the Mitochondrial matrix side of the membrane. A helical membrane pass occupies residues 16-34 (WPLTGALSALLMTSGLIMW). Residues 35-40 (FHFNST) lie on the Mitochondrial intermembrane side of the membrane. A helical transmembrane segment spans residues 41 to 66 (ALLMLGLTTNMLTMYQWWRDIVREST). The Mitochondrial matrix portion of the chain corresponds to 67–72 (FQGHHT). A helical membrane pass occupies residues 73 to 105 (PTVQKGLRYGMILFIISEVLFFTGFFWAFYHSS). Residues 106–128 (LAPTPELGGCWPPTGIHPLNPLE) are Mitochondrial intermembrane-facing. The helical transmembrane segment at 129–152 (VPLLNTSVLLASGVSITWAHHSLM) threads the bilayer. Residues 153–155 (EGN) are Mitochondrial matrix-facing. A helical membrane pass occupies residues 156-183 (RNHMLQALFITIALGVYFTLLQASEYYE). Residues 184-190 (APFTISD) lie on the Mitochondrial intermembrane side of the membrane. A helical membrane pass occupies residues 191–223 (GVYGSTFFVATGFHGLHVIIGSTFLIVCFFRQL). Over 224–232 (KFHFTSNHH) the chain is Mitochondrial matrix. Residues 233–256 (FGFEAAAWYWHFVDVVWLFLYVSI) traverse the membrane as a helical segment. Over 257–261 (YWWGS) the chain is Mitochondrial intermembrane.

The protein belongs to the cytochrome c oxidase subunit 3 family. Component of the cytochrome c oxidase (complex IV, CIV), a multisubunit enzyme composed of 14 subunits. The complex is composed of a catalytic core of 3 subunits MT-CO1, MT-CO2 and MT-CO3, encoded in the mitochondrial DNA, and 11 supernumerary subunits COX4I, COX5A, COX5B, COX6A, COX6B, COX6C, COX7A, COX7B, COX7C, COX8 and NDUFA4, which are encoded in the nuclear genome. The complex exists as a monomer or a dimer and forms supercomplexes (SCs) in the inner mitochondrial membrane with NADH-ubiquinone oxidoreductase (complex I, CI) and ubiquinol-cytochrome c oxidoreductase (cytochrome b-c1 complex, complex III, CIII), resulting in different assemblies (supercomplex SCI(1)III(2)IV(1) and megacomplex MCI(2)III(2)IV(2)).

It is found in the mitochondrion inner membrane. It carries out the reaction 4 Fe(II)-[cytochrome c] + O2 + 8 H(+)(in) = 4 Fe(III)-[cytochrome c] + 2 H2O + 4 H(+)(out). Its function is as follows. Component of the cytochrome c oxidase, the last enzyme in the mitochondrial electron transport chain which drives oxidative phosphorylation. The respiratory chain contains 3 multisubunit complexes succinate dehydrogenase (complex II, CII), ubiquinol-cytochrome c oxidoreductase (cytochrome b-c1 complex, complex III, CIII) and cytochrome c oxidase (complex IV, CIV), that cooperate to transfer electrons derived from NADH and succinate to molecular oxygen, creating an electrochemical gradient over the inner membrane that drives transmembrane transport and the ATP synthase. Cytochrome c oxidase is the component of the respiratory chain that catalyzes the reduction of oxygen to water. Electrons originating from reduced cytochrome c in the intermembrane space (IMS) are transferred via the dinuclear copper A center (CU(A)) of subunit 2 and heme A of subunit 1 to the active site in subunit 1, a binuclear center (BNC) formed by heme A3 and copper B (CU(B)). The BNC reduces molecular oxygen to 2 water molecules using 4 electrons from cytochrome c in the IMS and 4 protons from the mitochondrial matrix. The protein is Cytochrome c oxidase subunit 3 (MT-CO3) of Cephalophorus natalensis (Natal red duiker).